Consider the following 1574-residue polypeptide: Sterol 3-beta-glucosyltransferase (1574 aa).

The span at Thr37–Asn48 shows a compositional bias: polar residues. Disordered regions lie at residues Thr37 to Glu61 and Ala102 to Leu170. Basic and acidic residues-rich tracts occupy residues Glu107–Arg121 and Pro128–Tyr138. Over residues Asp139–Ile148 the composition is skewed to acidic residues. Over residues Glu149–Leu170 the composition is skewed to basic and acidic residues. The region spanning Asp253–Thr288 is the GRAM 1 domain. Residues Asp323–Phe471 form the PH domain. 4 disordered regions span residues Gly389–Glu413, Arg538–Pro559, Ala651–Gly722, and Asp774–Asn806. Polar residues predominate over residues Ile692–Lys701. The span at Ser702–Pro711 shows a compositional bias: basic and acidic residues. A compositionally biased stretch (polar residues) spans Asp712–Gly722. One can recognise a GRAM 2 domain in the interval Arg854–Lys920. Basic and acidic residues predominate over residues Arg964–Ser976. The segment at Arg964–Lys996 is disordered. Residues Phe985–Lys996 show a composition bias toward polar residues. UDP-alpha-D-glucose is bound by residues Ser1057, Arg1058, Asp1060, Asn1333, Ile1364, His1366, His1379, Ser1382, Gly1383, Thr1384, Asp1403, and Gln1404. The segment at Asp1505–Lys1574 is disordered. Residues Asp1510–Tyr1533 show a composition bias toward basic and acidic residues. Over residues Gly1563 to Lys1574 the composition is skewed to polar residues.

Belongs to the glycosyltransferase 28 family.

It localises to the cytoplasm. It is found in the membrane. The catalysed reaction is a sterol + UDP-alpha-D-glucose = a sterol 3-beta-D-glucoside + UDP + H(+). It carries out the reaction ergosterol + UDP-alpha-D-glucose = ergosteryl 3-beta-D-glucoside + UDP + H(+). Functionally, sterol glycosyltransferase responsible for the glycosylation of ergosterol to form ergosterol-glucoside. The sequence is that of Sterol 3-beta-glucosyltransferase from Debaryomyces hansenii (strain ATCC 36239 / CBS 767 / BCRC 21394 / JCM 1990 / NBRC 0083 / IGC 2968) (Yeast).